The chain runs to 634 residues: Chaperone protein DnaK (634 aa).

Phosphothreonine; by autocatalysis is present on Thr-197. Positions 592-634 (IGSSVYQQPGNQPPAPGGPNANASDDKGPDDDVIDADFTETKD) are disordered. The segment covering 619-634 (GPDDDVIDADFTETKD) has biased composition (acidic residues).

It belongs to the heat shock protein 70 family.

Acts as a chaperone. In Prochlorococcus marinus (strain MIT 9515), this protein is Chaperone protein DnaK.